The sequence spans 278 residues: Probable ribosomal RNA small subunit methyltransferase A (278 aa).

Residues histidine 25, methionine 27, glycine 52, glutamate 73, aspartate 98, and asparagine 114 each coordinate S-adenosyl-L-methionine.

This sequence belongs to the class I-like SAM-binding methyltransferase superfamily. rRNA adenine N(6)-methyltransferase family. RsmA subfamily.

Its subcellular location is the cytoplasm. Specifically dimethylates two adjacent adenosines in the loop of a conserved hairpin near the 3'-end of 16S rRNA in the 30S particle. May play a critical role in biogenesis of 30S subunits. This chain is Probable ribosomal RNA small subunit methyltransferase A, found in Methanopyrus kandleri (strain AV19 / DSM 6324 / JCM 9639 / NBRC 100938).